We begin with the raw amino-acid sequence, 236 residues long: DNA repair protein RecO (236 aa).

The protein belongs to the RecO family.

In terms of biological role, involved in DNA repair and RecF pathway recombination. This is DNA repair protein RecO from Rickettsia typhi (strain ATCC VR-144 / Wilmington).